We begin with the raw amino-acid sequence, 242 residues long: ATP synthase subunit b 2 (242 aa).

A helical membrane pass occupies residues 4–24 (LLAISSLTLLASLVLLVVSPA). The interval 43–74 (ADSEDGDHDHDHEGDDHGHDEAAGDEHGHGDG) is disordered. The span at 49–74 (DHDHDHEGDDHGHDEAAGDEHGHGDG) shows a compositional bias: basic and acidic residues.

It belongs to the ATPase B chain family. F-type ATPases have 2 components, F(1) - the catalytic core - and F(0) - the membrane proton channel. F(1) has five subunits: alpha(3), beta(3), gamma(1), delta(1), epsilon(1). F(0) has three main subunits: a(1), b(2) and c(10-14). The alpha and beta chains form an alternating ring which encloses part of the gamma chain. F(1) is attached to F(0) by a central stalk formed by the gamma and epsilon chains, while a peripheral stalk is formed by the delta and b chains.

It localises to the cell inner membrane. Functionally, f(1)F(0) ATP synthase produces ATP from ADP in the presence of a proton or sodium gradient. F-type ATPases consist of two structural domains, F(1) containing the extramembraneous catalytic core and F(0) containing the membrane proton channel, linked together by a central stalk and a peripheral stalk. During catalysis, ATP synthesis in the catalytic domain of F(1) is coupled via a rotary mechanism of the central stalk subunits to proton translocation. Component of the F(0) channel, it forms part of the peripheral stalk, linking F(1) to F(0). The polypeptide is ATP synthase subunit b 2 (Rhodopirellula baltica (strain DSM 10527 / NCIMB 13988 / SH1)).